A 347-amino-acid polypeptide reads, in one-letter code: 3,4-dihydroxy-2-butanone 4-phosphate synthase (347 aa).

The segment at 1 to 200 (MPLNRVREAI…ISDLIEYRMQ (200 aa)) is DHBP synthase. D-ribulose 5-phosphate is bound by residues 27-28 (RE), D32, 139-143 (RTGHT), and E163. E28 is a binding site for Mg(2+). Residue H142 participates in Mg(2+) binding. The tract at residues 201 to 347 (NEMLILIKER…IVLQGGPIQL (147 aa)) is GTP cyclohydrolase II-like.

The protein in the N-terminal section; belongs to the DHBP synthase family. It in the C-terminal section; belongs to the GTP cyclohydrolase II family. Mg(2+) serves as cofactor. Requires Mn(2+) as cofactor.

The enzyme catalyses D-ribulose 5-phosphate = (2S)-2-hydroxy-3-oxobutyl phosphate + formate + H(+). It functions in the pathway cofactor biosynthesis; riboflavin biosynthesis; 2-hydroxy-3-oxobutyl phosphate from D-ribulose 5-phosphate: step 1/1. In terms of biological role, catalyzes the conversion of D-ribulose 5-phosphate to formate and 3,4-dihydroxy-2-butanone 4-phosphate. This is 3,4-dihydroxy-2-butanone 4-phosphate synthase (ribB) from Wolinella succinogenes (strain ATCC 29543 / DSM 1740 / CCUG 13145 / JCM 31913 / LMG 7466 / NCTC 11488 / FDC 602W) (Vibrio succinogenes).